Here is a 373-residue protein sequence, read N- to C-terminus: Queuine tRNA-ribosyltransferase (373 aa).

The active-site Proton acceptor is the Asp90. Substrate contacts are provided by residues 90–94 (DSGGF), Asp144, Gln193, and Gly220. The RNA binding stretch occupies residues 251 to 257 (GVGTPED). Asp270 functions as the Nucleophile in the catalytic mechanism. An RNA binding; important for wobble base 34 recognition region spans residues 275-279 (TRNAR). 4 residues coordinate Zn(2+): Cys308, Cys310, Cys313, and His339.

Belongs to the queuine tRNA-ribosyltransferase family. In terms of assembly, homodimer. Within each dimer, one monomer is responsible for RNA recognition and catalysis, while the other monomer binds to the replacement base PreQ1. It depends on Zn(2+) as a cofactor.

It carries out the reaction 7-aminomethyl-7-carbaguanine + guanosine(34) in tRNA = 7-aminomethyl-7-carbaguanosine(34) in tRNA + guanine. It functions in the pathway tRNA modification; tRNA-queuosine biosynthesis. Functionally, catalyzes the base-exchange of a guanine (G) residue with the queuine precursor 7-aminomethyl-7-deazaguanine (PreQ1) at position 34 (anticodon wobble position) in tRNAs with GU(N) anticodons (tRNA-Asp, -Asn, -His and -Tyr). Catalysis occurs through a double-displacement mechanism. The nucleophile active site attacks the C1' of nucleotide 34 to detach the guanine base from the RNA, forming a covalent enzyme-RNA intermediate. The proton acceptor active site deprotonates the incoming PreQ1, allowing a nucleophilic attack on the C1' of the ribose to form the product. After dissociation, two additional enzymatic reactions on the tRNA convert PreQ1 to queuine (Q), resulting in the hypermodified nucleoside queuosine (7-(((4,5-cis-dihydroxy-2-cyclopenten-1-yl)amino)methyl)-7-deazaguanosine). This is Queuine tRNA-ribosyltransferase from Campylobacter jejuni subsp. jejuni serotype O:2 (strain ATCC 700819 / NCTC 11168).